We begin with the raw amino-acid sequence, 120 residues long: Ribonuclease P protein component 2 (120 aa).

Belongs to the eukaryotic/archaeal RNase P protein component 2 family. Consists of a catalytic RNA component and at least 4-5 protein subunits.

The protein localises to the cytoplasm. It carries out the reaction Endonucleolytic cleavage of RNA, removing 5'-extranucleotides from tRNA precursor.. Functionally, part of ribonuclease P, a protein complex that generates mature tRNA molecules by cleaving their 5'-ends. This chain is Ribonuclease P protein component 2, found in Thermococcus gammatolerans (strain DSM 15229 / JCM 11827 / EJ3).